Here is a 257-residue protein sequence, read N- to C-terminus: Urease accessory protein UreD (257 aa).

This sequence belongs to the UreD family. In terms of assembly, ureD, UreF and UreG form a complex that acts as a GTP-hydrolysis-dependent molecular chaperone, activating the urease apoprotein by helping to assemble the nickel containing metallocenter of UreC. The UreE protein probably delivers the nickel.

The protein resides in the cytoplasm. Its function is as follows. Required for maturation of urease via the functional incorporation of the urease nickel metallocenter. This is Urease accessory protein UreD from Sporosarcina pasteurii (Bacillus pasteurii).